We begin with the raw amino-acid sequence, 600 residues long: DNA ligase (600 aa).

Asp259 is a binding site for ATP. Residue Lys261 is the N6-AMP-lysine intermediate of the active site. ATP-binding residues include Arg266, Arg281, Glu311, Phe351, Arg428, and Lys434.

It belongs to the ATP-dependent DNA ligase family. Requires Mg(2+) as cofactor.

It catalyses the reaction ATP + (deoxyribonucleotide)n-3'-hydroxyl + 5'-phospho-(deoxyribonucleotide)m = (deoxyribonucleotide)n+m + AMP + diphosphate.. In terms of biological role, DNA ligase that seals nicks in double-stranded DNA during DNA replication, DNA recombination and DNA repair. This is DNA ligase from Acidianus ambivalens (Desulfurolobus ambivalens).